We begin with the raw amino-acid sequence, 856 residues long: Phospholipase D gamma 2 (856 aa).

The C2 domain maps to 21-161; it reads PLATSSGSLM…CSGNRIEGLF (141 aa). Aspartate 223 lines the Ca(2+) pocket. The PLD phosphodiesterase 1 domain maps to 362 to 397; sequence TIYTHHQKTMIVDAEAAQNRRKIVAFVGGLDLCNGR. Residues histidine 367, lysine 369, and aspartate 374 contribute to the active site. Histidine 367 contacts a 1,2-diacyl-sn-glycero-3-phosphate. Ca(2+) contacts are provided by histidine 403 and histidine 435. Positions 562 and 707 each coordinate a 1,2-diacyl-sn-glycero-3-phosphate. One can recognise a PLD phosphodiesterase 2 domain in the interval 702-729; it reads FMIYVHSKGMVVDDEFVLIGSANINQRS. Active-site residues include histidine 707, lysine 709, and aspartate 714. Residue glutamate 770 participates in Ca(2+) binding.

This sequence belongs to the phospholipase D family. C2-PLD subfamily. Ca(2+) serves as cofactor. Highly expressed in roots and flowers, moderately in stems, leaves and seedlings and low in siliques. Not detected in seeds.

It is found in the cytoplasm. It localises to the membrane. The catalysed reaction is a 1,2-diacyl-sn-glycero-3-phosphocholine + H2O = a 1,2-diacyl-sn-glycero-3-phosphate + choline + H(+). Its activity is regulated as follows. Inhibited by neomycin. Functionally, hydrolyzes glycerol-phospholipids at the terminal phosphodiesteric bond to generate phosphatidic acids (PA). Plays an important role in various cellular processes, including phytohormone action, vesicular trafficking, secretion, cytoskeletal arrangement, meiosis, tumor promotion, pathogenesis, membrane deterioration and senescence. Can use phosphatidylserine but prefers ethanolamine-containing lipids as substrates. Can use phosphatidylcholine (PC) as substrates in the presence of phosphatidylethanolamine (PE) and PIP2. Involved in membrane lipid modulation under aluminum (Al) stress and negatively modulate plant tolerance to Al. The sequence is that of Phospholipase D gamma 2 from Arabidopsis thaliana (Mouse-ear cress).